A 1107-amino-acid polypeptide reads, in one-letter code: Polyphosphatidylinositol phosphatase INP53 (1107 aa).

The SAC domain occupies 142–482; that stretch reads LKKLLSNGSF…GDQISQIYTG (341 aa). Serine 497 is modified (phosphoserine). Residues 926–1107 are disordered; the sequence is TASSVASSSP…LDSWQPLTPK (182 aa). A compositionally biased stretch (low complexity) spans 927-942; it reads ASSVASSSPVSSASAS. Residues 943-956 are compositionally biased toward polar residues; sequence LQPVRTQNSSQSRT. At serine 986 the chain carries Phosphoserine. 4 stretches are compositionally biased toward polar residues: residues 987–1005, 1020–1038, 1045–1063, and 1097–1107; these read PTPQTSTASLSSVTKNIQE, FSQNILTPKSTSNLASPMS, NSASESTRSAQDARQQTPT, and TLDSWQPLTPK. The residue at position 1035 (serine 1035) is a Phosphoserine. At threonine 1105 the chain carries Phosphothreonine.

This sequence belongs to the synaptojanin family. The protein in the central section; belongs to the inositol 1,4,5-trisphosphate 5-phosphatase family. As to quaternary structure, interacts (via SAC domain) with BSP1; the interaction is direct. Interacts with CHC1.

Its subcellular location is the cytoplasm. The enzyme catalyses a 1,2-diacyl-sn-glycero-3-phospho-(1D-myo-inositol-4,5-bisphosphate) + H2O = a 1,2-diacyl-sn-glycero-3-phospho-(1D-myo-inositol 4-phosphate) + phosphate. Its function is as follows. Dephosphorylates a number of phosphatidylinositols (PIs) like phosphatidylinositol 4,5-bisphosphate (PtdIns(4,5)P2), but also phosphatidylinositol 3-phosphate (PtdIns(3)P), phosphatidylinositol 4-phosphate (PtdIns(4)P), and phosphatidylinositol 3,5-bisphosphate (PtdIns(3,5)P2). Controls the cellular levels and subcellular distribution of phosphatidylinositol 3-phosphate and phosphatidylinositol 4,5-bisphosphate. Plays an essential role in a TGN (trans Golgi network)-to-early endosome pathway. Involved in clathrin-mediated protein sorting at the TGN. The sequence is that of Polyphosphatidylinositol phosphatase INP53 (INP53) from Saccharomyces cerevisiae (strain ATCC 204508 / S288c) (Baker's yeast).